Reading from the N-terminus, the 213-residue chain is Outer-membrane lipoprotein carrier protein (213 aa).

The N-terminal stretch at 1 to 18 (MKYFATICIAAYAGLAGA) is a signal peptide.

This sequence belongs to the LolA family. Monomer.

The protein resides in the periplasm. Participates in the translocation of lipoproteins from the inner membrane to the outer membrane. Only forms a complex with a lipoprotein if the residue after the N-terminal Cys is not an aspartate (The Asp acts as a targeting signal to indicate that the lipoprotein should stay in the inner membrane). This is Outer-membrane lipoprotein carrier protein from Albidiferax ferrireducens (strain ATCC BAA-621 / DSM 15236 / T118) (Rhodoferax ferrireducens).